An 838-amino-acid chain; its full sequence is MEYHEAVNFLFDLRRFQVKPGTESIRRLLSHLGDPHEGVSFVQVAGSNGKGSTARMVDAMLRESGAHVGLYTSPHFDDVRERVRVDGRKIPKSALSAFVAEAKPYLVERAADGEPLTFFETVTALALWYFDRAGVDVAVLEVGMGGELDATSAVDPVASAVTNVSLEHTAVLGDTVAEIAKTKAAVAPADAPLVTGTTGEALSVIREEAGDVLTVGDADADSDADVRVSYGGRVNHQEAAVTVETDAETLDVRIPLLGAYQARNAGIAVSLARQVRPDIDAEAIHRGLRNAHWPGRFEVMGTEPTVVLDGAHNPDACAQVATVLDEFDYDDLHLVYGAMHDKDHGEMVGALPEVASVVTCKADISRGEDPEILSSVFERLNGPAVETGGAVAAALDRARARADPDDCVLVVGSLYVVAEARTTWTRAVVPKTHRTLDDARRTLDRANVADAAERSERARRAVNRTVHTRVQRRQARVLREELLSVGGDCAVSGHEFGGELVDVVLTGTLDQFERLTAALEDPPYALAGVAAEIRETLDIEAADAGEDDERGAGDASDAGHDDYPWNDGTAVMGILNVTPNSFHDGGEFYDIDDAVEQARAMVDAGVDIIDVGGESTRPGADEVPVDEEIRRVAPVIEAIADLDVLVSVDTRKAAVGAAALDAGADILNDVTGLEDPEMRFLAAERGAPVIVMHSIDAPVDPSREVDYDDVVEDVIDELTELVLLAEKAGIPRRNLIVDPGLGFGKSKAENFELLGRTDEFAALGCPILVGHSHKSMFSLVGEEPGDNLAATVAGTAIAADRGADIVRVHDVPENVAAVNVALASRDPNRFEADAERED.

A folylpolyglutamate synthase region spans residues 1–418 (MEYHEAVNFL…LVVGSLYVVA (418 aa)). Position 46–52 (46–52 (GSNGKGS)) interacts with ATP. The disordered stretch occupies residues 541 to 561 (AADAGEDDERGAGDASDAGHD). Positions 569–819 (TAVMGILNVT…DVPENVAAVN (251 aa)) constitute a Pterin-binding domain. Residues 571-838 (VMGILNVTPN…RFEADAERED (268 aa)) form a DHPS region. Position 576 (Asn576) interacts with Mg(2+). Residues Thr616, Asp649, Asn668, Asp738, Lys774, and 807 to 809 (RVH) contribute to the (7,8-dihydropterin-6-yl)methyl diphosphate site.

This sequence in the N-terminal section; belongs to the folylpolyglutamate synthase family. The protein in the C-terminal section; belongs to the DHPS family. Mg(2+) serves as cofactor.

It carries out the reaction (6S)-5,6,7,8-tetrahydrofolyl-(gamma-L-Glu)(n) + L-glutamate + ATP = (6S)-5,6,7,8-tetrahydrofolyl-(gamma-L-Glu)(n+1) + ADP + phosphate + H(+). The catalysed reaction is (7,8-dihydropterin-6-yl)methyl diphosphate + 4-aminobenzoate = 7,8-dihydropteroate + diphosphate. The protein operates within cofactor biosynthesis; tetrahydrofolylpolyglutamate biosynthesis. It functions in the pathway cofactor biosynthesis; tetrahydrofolate biosynthesis; 7,8-dihydrofolate from 2-amino-4-hydroxy-6-hydroxymethyl-7,8-dihydropteridine diphosphate and 4-aminobenzoate: step 1/2. Can complement an H.volcanii mutant strain that is thymidine auxotroph because it lacks the two dihydrofolate reductase genes encoded by hdrA and hdrB. This chain is Probable bifunctional folylpolyglutamate synthase/dihydropteroate synthase (folCP), found in Haloferax volcanii (strain ATCC 29605 / DSM 3757 / JCM 8879 / NBRC 14742 / NCIMB 2012 / VKM B-1768 / DS2) (Halobacterium volcanii).